The primary structure comprises 209 residues: MTPPASPGVLYIVSAPSGAGKTSLVKALLKSDPAIRLSVSHTTRAPRPGESDGRDYHFVARDTFEKMLADGEFLEHAEVYGNFYGTSRGRIGQELDAGRDLLLEIDWQGAEQVKRHFPQSTSIFILPPTFSALRTRLTGRGQDSPEIIERRLAAAAHDVAHAEAFDYIIVNDDFDHALQDLVAITRSIRLEAQRQLKRHAALFGEFRRI.

In terms of domain architecture, Guanylate kinase-like spans 8 to 186 (GVLYIVSAPS…ALQDLVAITR (179 aa)). Residue 15–22 (APSGAGKT) coordinates ATP.

Belongs to the guanylate kinase family.

Its subcellular location is the cytoplasm. The enzyme catalyses GMP + ATP = GDP + ADP. Essential for recycling GMP and indirectly, cGMP. This is Guanylate kinase from Thiobacillus denitrificans (strain ATCC 25259 / T1).